Consider the following 628-residue polypeptide: Probable potassium transport system protein Kup 1 (628 aa).

Transmembrane regions (helical) follow at residues 18-38, 58-78, 106-126, 141-161, 175-195, 219-239, 253-273, 285-305, 343-363, 371-391, 401-421, and 425-445; these read ITLAALGVVYGDLGTSPLYAL, IVSLFFWTIMIVVSFKYVLLV, ALLMLLGLVGVGLFIGDAVIT, ITPELAPFVLPITLTVLVILF, FGPIMLLWFGVLAALGAYEIV, IAFITLGAVVLCVTGTEALYA, WGSLVMPALLLNYFGQGALLL, LLAPSWLAFPLLILATLATVI, IYLPLVNWLLLGGIIIVIIWF, AAYGIAVTGTMALTTLLLMVV, WLIALICAPLLLVDVTFFAAN, and FLAGGWLPILFALLAIIVMTT.

It belongs to the HAK/KUP transporter (TC 2.A.72) family.

The protein resides in the cell inner membrane. It catalyses the reaction K(+)(in) + H(+)(in) = K(+)(out) + H(+)(out). Its function is as follows. Transport of potassium into the cell. Likely operates as a K(+):H(+) symporter. The polypeptide is Probable potassium transport system protein Kup 1 (Aeromonas hydrophila subsp. hydrophila (strain ATCC 7966 / DSM 30187 / BCRC 13018 / CCUG 14551 / JCM 1027 / KCTC 2358 / NCIMB 9240 / NCTC 8049)).